The sequence spans 389 residues: Chalcone synthase 1 (389 aa).

Cysteine 163 is an active-site residue.

Belongs to the thiolase-like superfamily. Chalcone/stilbene synthases family.

It carries out the reaction (E)-4-coumaroyl-CoA + 3 malonyl-CoA + 3 H(+) = 2',4,4',6'-tetrahydroxychalcone + 3 CO2 + 4 CoA. Its pathway is secondary metabolite biosynthesis; flavonoid biosynthesis. Its function is as follows. The primary product of this enzyme is 4,2',4',6'-tetrahydroxychalcone (also termed naringenin-chalcone or chalcone) which can under specific conditions spontaneously isomerize into naringenin. The sequence is that of Chalcone synthase 1 (CHS1) from Citrus sinensis (Sweet orange).